The following is a 375-amino-acid chain: All-trans-retinol dehydrogenase [NAD(+)] ADH1B (375 aa).

N-acetylserine is present on S2. S23 carries the phosphoserine modification. A Phosphotyrosine modification is found at Y35. The Zn(2+) site is built by C47, H68, C98, C101, C104, C112, and C175. NAD(+)-binding positions include 200–205, D224, K229, 293–295, and R370; these read GLGGVG and VGV.

The protein belongs to the zinc-containing alcohol dehydrogenase family. In terms of assembly, dimer of identical or non-identical chains of three types; alpha, beta and gamma. It depends on Zn(2+) as a cofactor.

It localises to the cytoplasm. It catalyses the reaction all-trans-retinol + NAD(+) = all-trans-retinal + NADH + H(+). The enzyme catalyses all-trans-4-hydroxyretinol + NAD(+) = all-trans-4-hydroxyretinal + NADH + H(+). The catalysed reaction is all-trans-4-oxoretinol + NAD(+) = all-trans-4-oxoretinal + NADH + H(+). Functionally, catalyzes the NAD-dependent oxidation of all-trans-retinol and its derivatives such as all-trans-4-hydroxyretinol and may participate in retinoid metabolism. In vitro can also catalyze the NADH-dependent reduction of all-trans-retinal and its derivatives such as all-trans-4-oxoretinal. Catalyzes in the oxidative direction with higher efficiency. Has the same affinity for all-trans-4-hydroxyretinol and all-trans-4-oxoretinal. In Homo sapiens (Human), this protein is All-trans-retinol dehydrogenase [NAD(+)] ADH1B.